The chain runs to 100 residues: Small ribosomal subunit protein uS14 (100 aa).

Belongs to the universal ribosomal protein uS14 family. In terms of assembly, part of the 30S ribosomal subunit. Contacts proteins S3 and S10.

Binds 16S rRNA, required for the assembly of 30S particles and may also be responsible for determining the conformation of the 16S rRNA at the A site. In Synechococcus sp. (strain RCC307), this protein is Small ribosomal subunit protein uS14.